A 329-amino-acid chain; its full sequence is Phosphate acetyltransferase (329 aa).

The protein belongs to the phosphate acetyltransferase and butyryltransferase family.

The protein resides in the cytoplasm. It carries out the reaction acetyl-CoA + phosphate = acetyl phosphate + CoA. Its pathway is metabolic intermediate biosynthesis; acetyl-CoA biosynthesis; acetyl-CoA from acetate: step 2/2. This Staphylococcus epidermidis (strain ATCC 35984 / DSM 28319 / BCRC 17069 / CCUG 31568 / BM 3577 / RP62A) protein is Phosphate acetyltransferase (pta).